An 81-amino-acid chain; its full sequence is Photosystem I iron-sulfur center (81 aa).

2 4Fe-4S ferredoxin-type domains span residues 2–31 (SHSV…MIPW) and 39–68 (IAPA…VRVY). Residues C11, C14, C17, C21, C48, C51, C54, and C58 each contribute to the [4Fe-4S] cluster site.

In terms of assembly, the eukaryotic PSI reaction center is composed of at least 11 subunits. [4Fe-4S] cluster serves as cofactor.

The protein localises to the plastid. The protein resides in the chloroplast thylakoid membrane. It catalyses the reaction reduced [plastocyanin] + hnu + oxidized [2Fe-2S]-[ferredoxin] = oxidized [plastocyanin] + reduced [2Fe-2S]-[ferredoxin]. Its function is as follows. Apoprotein for the two 4Fe-4S centers FA and FB of photosystem I (PSI); essential for photochemical activity. FB is the terminal electron acceptor of PSI, donating electrons to ferredoxin. The C-terminus interacts with PsaA/B/D and helps assemble the protein into the PSI complex. Required for binding of PsaD and PsaE to PSI. PSI is a plastocyanin-ferredoxin oxidoreductase, converting photonic excitation into a charge separation, which transfers an electron from the donor P700 chlorophyll pair to the spectroscopically characterized acceptors A0, A1, FX, FA and FB in turn. The polypeptide is Photosystem I iron-sulfur center (Drimys granadensis).